Consider the following 74-residue polypeptide: Tetrahydromethanopterin S-methyltransferase subunit G (74 aa).

Residues 50–70 form a helical membrane-spanning segment; the sequence is IGILYGLVIGLYLCMLYILLG.

Belongs to the MtrG family. In terms of assembly, the complex is composed of 8 subunits; MtrA, MtrB, MtrC, MtrD, MtrE, MtrF, MtrG and MtrH.

The protein localises to the cell membrane. It carries out the reaction 5-methyl-5,6,7,8-tetrahydromethanopterin + coenzyme M + 2 Na(+)(in) = 5,6,7,8-tetrahydromethanopterin + methyl-coenzyme M + 2 Na(+)(out). It participates in one-carbon metabolism; methanogenesis from CO(2); methyl-coenzyme M from 5,10-methylene-5,6,7,8-tetrahydromethanopterin: step 2/2. In terms of biological role, part of a complex that catalyzes the formation of methyl-coenzyme M and tetrahydromethanopterin from coenzyme M and methyl-tetrahydromethanopterin. This is an energy-conserving, sodium-ion translocating step. The sequence is that of Tetrahydromethanopterin S-methyltransferase subunit G from Methanopyrus kandleri (strain AV19 / DSM 6324 / JCM 9639 / NBRC 100938).